A 95-amino-acid chain; its full sequence is Glutamyl-tRNA(Gln) amidotransferase subunit C (95 aa).

It belongs to the GatC family. As to quaternary structure, heterotrimer of A, B and C subunits.

It catalyses the reaction L-glutamyl-tRNA(Gln) + L-glutamine + ATP + H2O = L-glutaminyl-tRNA(Gln) + L-glutamate + ADP + phosphate + H(+). The enzyme catalyses L-aspartyl-tRNA(Asn) + L-glutamine + ATP + H2O = L-asparaginyl-tRNA(Asn) + L-glutamate + ADP + phosphate + 2 H(+). In terms of biological role, allows the formation of correctly charged Asn-tRNA(Asn) or Gln-tRNA(Gln) through the transamidation of misacylated Asp-tRNA(Asn) or Glu-tRNA(Gln) in organisms which lack either or both of asparaginyl-tRNA or glutaminyl-tRNA synthetases. The reaction takes place in the presence of glutamine and ATP through an activated phospho-Asp-tRNA(Asn) or phospho-Glu-tRNA(Gln). The polypeptide is Glutamyl-tRNA(Gln) amidotransferase subunit C (Mesorhizobium japonicum (strain LMG 29417 / CECT 9101 / MAFF 303099) (Mesorhizobium loti (strain MAFF 303099))).